We begin with the raw amino-acid sequence, 388 residues long: Phosphopentomutase (388 aa).

Residues D10, D282, H287, D323, H324, and H335 each contribute to the Mn(2+) site.

It belongs to the phosphopentomutase family. Mn(2+) is required as a cofactor.

The protein localises to the cytoplasm. It catalyses the reaction 2-deoxy-alpha-D-ribose 1-phosphate = 2-deoxy-D-ribose 5-phosphate. The catalysed reaction is alpha-D-ribose 1-phosphate = D-ribose 5-phosphate. Its pathway is carbohydrate degradation; 2-deoxy-D-ribose 1-phosphate degradation; D-glyceraldehyde 3-phosphate and acetaldehyde from 2-deoxy-alpha-D-ribose 1-phosphate: step 1/2. Functionally, isomerase that catalyzes the conversion of deoxy-ribose 1-phosphate (dRib-1-P) and ribose 1-phosphate (Rib-1-P) to deoxy-ribose 5-phosphate (dRib-5-P) and ribose 5-phosphate (Rib-5-P), respectively. The polypeptide is Phosphopentomutase (Acetivibrio thermocellus (strain ATCC 27405 / DSM 1237 / JCM 9322 / NBRC 103400 / NCIMB 10682 / NRRL B-4536 / VPI 7372) (Clostridium thermocellum)).